Here is a 292-residue protein sequence, read N- to C-terminus: Aspartate carbamoyltransferase catalytic subunit (292 aa).

Residues Arg-49 and Thr-50 each contribute to the carbamoyl phosphate site. Lys-77 contributes to the L-aspartate binding site. Residues Arg-99, His-127, and Gln-130 each contribute to the carbamoyl phosphate site. 2 residues coordinate L-aspartate: Arg-161 and Arg-211. Carbamoyl phosphate is bound by residues Gly-250 and Pro-251.

Belongs to the aspartate/ornithine carbamoyltransferase superfamily. ATCase family. As to quaternary structure, heterododecamer (2C3:3R2) of six catalytic PyrB chains organized as two trimers (C3), and six regulatory PyrI chains organized as three dimers (R2).

It carries out the reaction carbamoyl phosphate + L-aspartate = N-carbamoyl-L-aspartate + phosphate + H(+). The protein operates within pyrimidine metabolism; UMP biosynthesis via de novo pathway; (S)-dihydroorotate from bicarbonate: step 2/3. In terms of biological role, catalyzes the condensation of carbamoyl phosphate and aspartate to form carbamoyl aspartate and inorganic phosphate, the committed step in the de novo pyrimidine nucleotide biosynthesis pathway. This is Aspartate carbamoyltransferase catalytic subunit from Campylobacter lari (strain RM2100 / D67 / ATCC BAA-1060).